The primary structure comprises 75 residues: Protein P8 (75 aa).

The interval 19–47 (PMGGMPSIASSSSAETGQQTQSGNFTGGG) is disordered. The segment covering 26–39 (IASSSSAETGQQTQ) has biased composition (polar residues). The chain crosses the membrane as a helical span at residues 55–72 (NNQLLIVGAVVIGLFLVI).

It is found in the virion membrane. The sequence is that of Protein P8 (VIII) from Pseudoalteromonas phage PM2 (Bacteriophage PM2).